Here is a 186-residue protein sequence, read N- to C-terminus: Peptidyl-tRNA hydrolase (186 aa).

Tyrosine 14 is a binding site for tRNA. The active-site Proton acceptor is the histidine 19. TRNA-binding residues include tyrosine 64, asparagine 66, and asparagine 113.

This sequence belongs to the PTH family. In terms of assembly, monomer.

It localises to the cytoplasm. It carries out the reaction an N-acyl-L-alpha-aminoacyl-tRNA + H2O = an N-acyl-L-amino acid + a tRNA + H(+). Hydrolyzes ribosome-free peptidyl-tRNAs (with 1 or more amino acids incorporated), which drop off the ribosome during protein synthesis, or as a result of ribosome stalling. In terms of biological role, catalyzes the release of premature peptidyl moieties from peptidyl-tRNA molecules trapped in stalled 50S ribosomal subunits, and thus maintains levels of free tRNAs and 50S ribosomes. The sequence is that of Peptidyl-tRNA hydrolase from Agathobacter rectalis (strain ATCC 33656 / DSM 3377 / JCM 17463 / KCTC 5835 / VPI 0990) (Eubacterium rectale).